The following is a 307-amino-acid chain: Ribulose bisphosphate carboxylase/oxygenase activase, chloroplastic (307 aa).

The transit peptide at 1–46 directs the protein to the chloroplast; it reads MSIPDDKEAGTIDEFLQKEGVLDILQKLDHDLVGLKPVKDRVREIA. Position 73 to 80 (73 to 80) interacts with ATP; it reads GSPGTGKT.

It belongs to the CbxX/CfxQ family. In terms of assembly, forms homooligomers. Forms heterohexameric rings with the plastid-encoded Rca subunit consisting of 3 of each nuclear- and plastidial-encoded subunits that alternate in the ring.

It is found in the plastid. The protein resides in the chloroplast. Its function is as follows. Required for the expression of ribulose 1,5-bisphosphate carboxylase/oxygenase (RuBisCo). ATPase involved in the activation of red-type RuBisCo, which tends to form inactive complexes with its substrate ribulose 1,5-bisphosphate (RuBP). Catalyzes the release of RuBP from inhibited RuBisCo in an ATP-dependent manner. Activation of RuBisCO involves the ATP-dependent carboxylation of the epsilon-amino group of lysine leading to a carbamate structure. The nuclear-encoded subunit plays a more critical role in activase function than the plastidial-encoded subunit. The sequence is that of Ribulose bisphosphate carboxylase/oxygenase activase, chloroplastic from Cyanidioschyzon merolae (strain NIES-3377 / 10D) (Unicellular red alga).